A 429-amino-acid polypeptide reads, in one-letter code: Glycine betaine monooxygenase oxygenase subunit (429 aa).

The Rieske domain maps to 56 to 163; it reads WLIAGMTCEI…VKTAGGYIFI (108 aa). [2Fe-2S] cluster is bound by residues C98, H100, C118, and H121. Residues H217 and H222 each coordinate Fe cation.

It belongs to the bacterial ring-hydroxylating dioxygenase alpha subunit family. The system is composed of an oxygenase subunit (GbcA) and a reductase subunit (GbcB). Requires [2Fe-2S] cluster as cofactor. Fe cation serves as cofactor.

The catalysed reaction is glycine betaine + NADH + O2 + H(+) = N,N-dimethylglycine + formaldehyde + NAD(+) + H2O. In terms of biological role, involved in degradation of glycine betaine. Part of a Rieske-type oxygenase system that catalyzes the conversion of glycine betaine (GB) to dimethylglycine (DMG). This subunit is the terminal oxygenase component of the system. The polypeptide is Glycine betaine monooxygenase oxygenase subunit (Pseudomonas aeruginosa (strain UCBPP-PA14)).